Reading from the N-terminus, the 320-residue chain is Aspartate carbamoyltransferase catalytic subunit (320 aa).

Carbamoyl phosphate contacts are provided by Arg-53 and Thr-54. L-aspartate is bound at residue Lys-82. Residues Arg-103, His-131, and Gln-134 each contribute to the carbamoyl phosphate site. L-aspartate-binding residues include Arg-164 and Arg-227. Residues Leu-266 and Pro-267 each coordinate carbamoyl phosphate.

It belongs to the aspartate/ornithine carbamoyltransferase superfamily. ATCase family. As to quaternary structure, heterododecamer (2C3:3R2) of six catalytic PyrB chains organized as two trimers (C3), and six regulatory PyrI chains organized as three dimers (R2).

The catalysed reaction is carbamoyl phosphate + L-aspartate = N-carbamoyl-L-aspartate + phosphate + H(+). It functions in the pathway pyrimidine metabolism; UMP biosynthesis via de novo pathway; (S)-dihydroorotate from bicarbonate: step 2/3. Catalyzes the condensation of carbamoyl phosphate and aspartate to form carbamoyl aspartate and inorganic phosphate, the committed step in the de novo pyrimidine nucleotide biosynthesis pathway. This Bifidobacterium longum (strain NCC 2705) protein is Aspartate carbamoyltransferase catalytic subunit.